The chain runs to 184 residues: Ribosome-recycling factor (184 aa).

The protein belongs to the RRF family.

The protein resides in the cytoplasm. Functionally, responsible for the release of ribosomes from messenger RNA at the termination of protein biosynthesis. May increase the efficiency of translation by recycling ribosomes from one round of translation to another. In Mycoplasma pneumoniae (strain ATCC 29342 / M129 / Subtype 1) (Mycoplasmoides pneumoniae), this protein is Ribosome-recycling factor.